Here is a 98-residue protein sequence, read N- to C-terminus: Hainantoxin-XVII.3 (98 aa).

A signal peptide spans 1-40; that stretch reads MTTVGVSLFRRSPEKITMKIATFLGLSFLLIASYFLICEA. The propeptide occupies 41–64; the sequence is QHPGFQELLILEENMRDPENSKER. Disulfide bonds link Cys-66-Cys-81, Cys-73-Cys-85, and Cys-80-Cys-95.

This sequence belongs to the hainantoxin family. 17 subfamily. In terms of tissue distribution, expressed by the venom gland.

The protein resides in the secreted. Its function is as follows. Inhibits with low potency Kv1.2/KCNA2 and Kv1.3/KCNA3 voltage-gated potassium channels. The polypeptide is Hainantoxin-XVII.3 (Cyriopagopus hainanus (Chinese bird spider)).